The primary structure comprises 239 residues: Small ribosomal subunit protein uS3 (239 aa).

One can recognise a KH type-2 domain in the interval 39-107; the sequence is IREFIKEECK…ELHLNIVEVR (69 aa). Basic and acidic residues predominate over residues 212-221; the sequence is PQARDRKAQE. The disordered stretch occupies residues 212 to 239; the sequence is PQARDRKAQELQDGPAPRGAGGNRRGDR. Positions 230–239 are enriched in gly residues; the sequence is GAGGNRRGDR.

The protein belongs to the universal ribosomal protein uS3 family. In terms of assembly, part of the 30S ribosomal subunit. Forms a tight complex with proteins S10 and S14.

In terms of biological role, binds the lower part of the 30S subunit head. Binds mRNA in the 70S ribosome, positioning it for translation. This Ruegeria sp. (strain TM1040) (Silicibacter sp.) protein is Small ribosomal subunit protein uS3.